The primary structure comprises 647 residues: A-type voltage-gated potassium channel KCND1 (647 aa).

Residues 1-183 lie on the Cytoplasmic side of the membrane; that stretch reads MAAGVATWLP…RAFENPHTST (183 aa). An interaction with KCNIP1, KCNIP2, and other family members region spans residues 2-20; that stretch reads AAGVATWLPFARAAAVGWL. The Zn(2+) site is built by His104, Cys131, and Cys132. The disordered stretch occupies residues 144–164; it reads AQRLAEDEEAEQTGDGPALPA. The helical transmembrane segment at 184-205 threads the bilayer; sequence AALVFYYVTGFFIAVSVIANVV. Residues 206–230 are Extracellular-facing; sequence ETIPCRGPARRPPREQPCGDRFPLA. The helical transmembrane segment at 231-252 threads the bilayer; that stretch reads FFCMDTACVLIFTGEYLLRLFA. Residues 253–263 lie on the Cytoplasmic side of the membrane; it reads APSRCRFLRSV. Residues 264 to 284 form a helical membrane-spanning segment; it reads MSLIDVVAILPYYIGLLVPKN. The Extracellular portion of the chain corresponds to 285-287; it reads EDV. The helical; Voltage-sensor transmembrane segment at 288–308 threads the bilayer; that stretch reads SGAFVTLRVFRVFRIFKFSRH. Over 309–323 the chain is Cytoplasmic; that stretch reads SQGLRILGYTLKSCA. The interval 310 to 323 is S4-S5 linker; the sequence is QGLRILGYTLKSCA. A helical transmembrane segment spans residues 324–345; it reads SELGFLLFSLTMAIIIFATVMF. At 346-359 the chain is on the extracellular side; that stretch reads YAEKGTSKTNFTSI. The segment at residues 360 to 371 is an intramembrane region (helical); the sequence is PAAFWYTIVTMT. A Selectivity filter motif is present at residues 372-377; it reads TLGYGD. An intramembrane segment occupies 372 to 379; that stretch reads TLGYGDMV. Residues 380–386 are Extracellular-facing; sequence PSTIAGK. A helical membrane pass occupies residues 387-415; the sequence is IFGSICSLSGVLVIALPVPVIVSNFSRIY. Topologically, residues 416–647 are cytoplasmic; sequence HQNQRADKRR…LPETVKISSL (232 aa). The tract at residues 474–489 is required for dendritic targeting; sequence FEQQHHHLLHCLEKTT. A compositionally biased stretch (low complexity) spans 510–520; sequence GRTSRSTSVSS. The disordered stretch occupies residues 510–531; the sequence is GRTSRSTSVSSQPVGPSSLLSS. Positions 521 to 530 are enriched in polar residues; sequence QPVGPSSLLS. At Ser555 the chain carries Phosphoserine. Disordered regions lie at residues 564-584 and 601-634; these read GLRR…PHDS and IPTP…RLGT.

It belongs to the potassium channel family. D (Shal) (TC 1.A.1.2) subfamily. Kv4.1/KCND1 sub-subfamily. Component of heteromultimeric potassium channels. Identified in potassium channel complexes containing KCND1, KCND2, KCND3, KCNIP1, KCNIP2, KCNIP3, KCNIP4, DPP6 and DPP10. In terms of tissue distribution, detected in carotid body chemoreceptor cells and in frontal cortex.

Its subcellular location is the cell membrane. It catalyses the reaction K(+)(in) = K(+)(out). A-type voltage-gated potassium channel that mediates transmembrane potassium transport in excitable membranes in the brain. Mediates A-type current I(SA) in suprachiasmatic nucleus (SCN) neurons. Exhibits a low-threshold A-type current with a hyperpolarized steady-state inactivation midpoint and the recovery process was steeply voltage-dependent, with recovery being markedly faster at more negative potentials. May regulates repetitive firing rates in the suprachiasmatic nucleus (SCN) neurons and circadian rhythms in neuronal excitability and behavior. Contributes to the regulation of the circadian rhythm of action potential firing in suprachiasmatic nucleus neurons, which regulates the circadian rhythm of locomotor activity. The regulatory subunit KCNIP1 modulates the kinetics of channel inactivation, increases the current amplitudes and accelerates recovery from inactivation, shifts activation in a depolarizing direction. The regulatory subunit DPP10 decreases the voltage sensitivity of the inactivation channel gating. In Oryctolagus cuniculus (Rabbit), this protein is A-type voltage-gated potassium channel KCND1.